Consider the following 171-residue polypeptide: UPF0398 protein stu0232 (171 aa).

The protein belongs to the UPF0398 family.

In Streptococcus thermophilus (strain ATCC BAA-250 / LMG 18311), this protein is UPF0398 protein stu0232.